We begin with the raw amino-acid sequence, 120 residues long: Small ribosomal subunit protein eS24 (120 aa).

The segment at 101 to 120 (RDAGTKQKKGGSKGGQGAKG) is disordered.

It belongs to the eukaryotic ribosomal protein eS24 family.

This is Small ribosomal subunit protein eS24 from Saccharolobus islandicus (strain M.16.4 / Kamchatka #3) (Sulfolobus islandicus).